Here is a 202-residue protein sequence, read N- to C-terminus: ADP-ribosylation factor-like protein 15 (202 aa).

GTP is bound by residues 39 to 46 (GLTGSGKT), 82 to 86 (ELGGA), and 142 to 145 (NHQD).

This sequence belongs to the small GTPase superfamily. Arf family.

The protein is ADP-ribosylation factor-like protein 15 (ARL15) of Bos taurus (Bovine).